Consider the following 249-residue polypeptide: Glycoprotein 2a (249 aa).

The N-terminal stretch at methionine 1–cysteine 35 is a signal peptide. Topologically, residues leucine 36–serine 207 are virion surface. 2 N-linked (GlcNAc...) asparagine; by host glycosylation sites follow: asparagine 173 and asparagine 179. The helical transmembrane segment at valine 208 to leucine 228 threads the bilayer. The Intravirion segment spans residues arginine 229–serine 249.

In terms of assembly, heterotrimer of GP2a, GP3, and GP4. The GP2a-GP3-GP4 complex associates with the E protein. Interacts with host CD163; this interaction plays a role in virus entry into host cell.

It is found in the virion membrane. It localises to the host endoplasmic reticulum membrane. The protein localises to the host Golgi apparatus membrane. Its subcellular location is the secreted. Functionally, minor envelope protein. Along with GP4, serves as the viral attachment protein responsible for mediating interactions with CD163 thereby playing a role in virus entry into susceptible host cells. The sequence is that of Glycoprotein 2a (GP2a) from Porcine reproductive and respiratory syndrome virus (strain Lelystad) (PRRSV).